A 680-amino-acid polypeptide reads, in one-letter code: tRNA 5-methylaminomethyl-2-thiouridine biosynthesis bifunctional protein MnmC (680 aa).

Positions 1-245 (MSHPPIQTAT…KREMLTGILP (245 aa)) are tRNA (mnm(5)s(2)U34)-methyltransferase. Residues 270-680 (IGGGIVSALT…PVQQRVSVLS (411 aa)) form an FAD-dependent cmnm(5)s(2)U34 oxidoreductase region.

The protein in the N-terminal section; belongs to the methyltransferase superfamily. tRNA (mnm(5)s(2)U34)-methyltransferase family. This sequence in the C-terminal section; belongs to the DAO family. It depends on FAD as a cofactor.

The protein localises to the cytoplasm. It carries out the reaction 5-aminomethyl-2-thiouridine(34) in tRNA + S-adenosyl-L-methionine = 5-methylaminomethyl-2-thiouridine(34) in tRNA + S-adenosyl-L-homocysteine + H(+). Catalyzes the last two steps in the biosynthesis of 5-methylaminomethyl-2-thiouridine (mnm(5)s(2)U) at the wobble position (U34) in tRNA. Catalyzes the FAD-dependent demodification of cmnm(5)s(2)U34 to nm(5)s(2)U34, followed by the transfer of a methyl group from S-adenosyl-L-methionine to nm(5)s(2)U34, to form mnm(5)s(2)U34. The polypeptide is tRNA 5-methylaminomethyl-2-thiouridine biosynthesis bifunctional protein MnmC (Yersinia enterocolitica serotype O:8 / biotype 1B (strain NCTC 13174 / 8081)).